A 91-amino-acid polypeptide reads, in one-letter code: MKKKVDTEKQITSWASDLASKNETKVQEKLILSSYIQDIENHVYFPKAMISLEKKLRDQNNICALSKEVNQFYFKVVEVNQRKSWMVGLIV.

Its function is as follows. Imparts immunity to lactococcin-B to naturally sensitive host strains. The chain is Lactococcin-B immunity protein (lciB) from Lactococcus lactis subsp. cremoris (Streptococcus cremoris).